The chain runs to 332 residues: Homeobox protein SIX3 (332 aa).

An interaction with TLE5 region spans residues 72-119; it reads APPEELSMFQLPTLNFSPEQVASVCETLEETGDIERLGRFLWSLPVAP. A DNA-binding region (homeobox) is located at residues 206-265; that stretch reads GEQKTHCFKERTRSLLREWYLQDPYPNPSKKRELAQATGLTPTQVGNWFKNRRQRDRAAA. Residues 232–234 are bind to RHO promoter; it reads NPS. Disordered regions lie at residues 232 to 251 and 258 to 332; these read NPSKKRELAQATGLTPTQVG and RQRD…ECDV. Over residues 293-309 the composition is skewed to low complexity; sequence SAESPSTAASPTTSVSS. Positions 316 to 332 are enriched in polar residues; it reads TGTSILSVTSSDSECDV.

Belongs to the SIX/Sine oculis homeobox family. As to quaternary structure, interacts with EYA4; translocates EYA4 from the cytoplasm to the nucleus and promotes activation of their target genes. Interacts with MTA1 and HDAC2; represses its own transcription. Interacts with MTA1; facilitates the binding of SIX3 to the core DNA motif of SIX3 promoter. Interacts with EYA1; promotes EYA1 translocation to the nucleus. Interacts with TLE1 and TLE5 (via Q domain); can act in combination with either TLE1 and/or TLE5 leading to transcriptional repression or activation, respectively. Interacts (via homeobox) with NR4A3; differentially regulates the transcriptional activities NR4A3. Interacts with GMNN. Interacts with TLE4.

Its subcellular location is the nucleus. Functionally, transcriptional regulator which can act as both a transcriptional repressor and activator by binding a ATTA homeodomain core recognition sequence on these target genes. During forebrain development represses WNT1 expression allowing zona limitans intrathalamica formation and thereby ensuring proper anterio-posterior patterning of the diencephalon and formation of the rostral diencephalon. Acts as a direct upstream activator of SHH expression in the rostral diencephalon ventral midline and that in turn SHH maintains its expression. In addition, Six3 activity is required for the formation of the telencephalon. During postnatal stages of brain development is necessary for ependymal cell maturation by promoting the maturation of radial glia into ependymal cells through regulation of neuroblast proliferation and migration. Acts on the proliferation and differentiation of neural progenitor cells through activating transcription of CCND1 and CCND2. During early lens formation plays a role in lens induction and specification by activating directly PAX6 in the presumptive lens ectoderm. In turn PAX6 activates SIX3 resulting in activation of PDGFRA and CCND1 promoting cell proliferation. Also is required for the neuroretina development by directly suppressing WNT8B expression in the anterior neural plate territory. Its action during retina development and lens morphogenesis is TLE5 and TLE4-dependent manner. Furthermore, during eye development regulates several genes expression. Before and during early lens development represses the CRYGF promoter by binding a SIX repressor element. Directly activates RHO transcription, or cooperates with CRX or NRL. Six3 also functions in the formation of the proximodistal axis of the optic cup, and promotes the formation of optic vesicles-like structures. During pituitary development, acts in parallel or alternatively with HESX1 to control cell proliferation through Wnt/beta-catenin pathway. Plays a role in eye development by suppressing WNT1 expression and in dorsal-ventral patterning by repressing BMP signaling pathway. This chain is Homeobox protein SIX3 (SIX3), found in Homo sapiens (Human).